The primary structure comprises 329 residues: Sulfate/thiosulfate import ATP-binding protein CysA (329 aa).

One can recognise an ABC transporter domain in the interval 3–237 (IEVRNVSKRF…PANDFVYHFL (235 aa)). Residue 35–42 (GPSGCGKT) coordinates ATP.

Belongs to the ABC transporter superfamily. Sulfate/tungstate importer (TC 3.A.1.6) family. The complex is composed of two ATP-binding proteins (CysA), two transmembrane proteins (CysT and CysW) and a solute-binding protein (CysP).

It is found in the cell inner membrane. It catalyses the reaction sulfate(out) + ATP + H2O = sulfate(in) + ADP + phosphate + H(+). It carries out the reaction thiosulfate(out) + ATP + H2O = thiosulfate(in) + ADP + phosphate + H(+). Functionally, part of the ABC transporter complex CysAWTP involved in sulfate/thiosulfate import. Responsible for energy coupling to the transport system. This is Sulfate/thiosulfate import ATP-binding protein CysA from Pseudomonas putida (strain ATCC 47054 / DSM 6125 / CFBP 8728 / NCIMB 11950 / KT2440).